Reading from the N-terminus, the 531-residue chain is MQPIVWLLGGAIALLVVVIRAAWTYGHRNQDMPSGPPTLPFIGNAHLIPKSYTHIQFTAWARQYGGLYMLKVGNSNMAVVTDRRIVKEVLDSKSSLYSHRPHSFVSHELITQGDHLLVMHYGPKWRTFRRLVHQHLMESMVDSQHLPIVNAEAIQLVRDYMLDPEHHMAHPKRFSNSITNSIVFGIRTADRHGSNMNRLYTLMEQWSEIMETGATPPVDIFPWLKRLPEALFGHYVTRARAIGAQMETLYEDILQRVEKRRSGGVHLDTFMDRVIASQDRNQLPRHQLAFIGGVLMEGGSDTSSSLTLAIVQALTLHPEVQRKAHAEIDAVVGHARSPVWDDLARLPYINMIIKEGHRWRPILPLCFPHALGQDDWVDGKFLPKGTMVVVNTWGMHMDPDHRLNQKYDPAKFVPERFAEHPALAPEYVPGAWENRDHYGYGVSRRICPGIHLAERNMFLAIAKLLWAFEFQPGPEGEPCDSDPVTGYQHGFLYCAKPYSTRPVLRSESIRETVEREFALAQREVFSTFTEG.

The helical transmembrane segment at 3–23 threads the bilayer; that stretch reads PIVWLLGGAIALLVVVIRAAW. Cysteine 447 contacts heme.

It belongs to the cytochrome P450 family. Heme serves as cofactor.

It is found in the endoplasmic reticulum membrane. The catalysed reaction is 3-methylphenol + reduced [NADPH--hemoprotein reductase] + O2 = 3-hydroxybenzyl alcohol + oxidized [NADPH--hemoprotein reductase] + H2O + H(+). Its pathway is secondary metabolite biosynthesis. Cytochrome P450 monooxygenase; part of the gene cluster that mediates the biosynthesis of aculins. The pathway begins with the synthesis of 6-methylsalicylic acid by the polyketide synthase (PKS) acuA via condensation of acetate and malonate units. The 6-methylsalicylic acid decarboxylase acuB then catalyzes the decarboxylation of 6-methylsalicylic acid to yield m-cresol (also known as 3-methylphenol). These first reactions occur in the cytosol. The intermediate m-cresol is then transported into the endoplasmic reticulum where the cytochrome P450 monooxygenase acuC converts it to m-hydroxybenzyl alcohol, which is further converted to gentisyl alcohol by the cytochrome P450 monooxygenase acuD. Gentisyl alcohol is further oxidized by the oxidoreductase acuE that probably catalyzes hydroxylation of the aromatic ring. The aromatic system might then be opened by oxidation through a Baeyer-Villiger type of oxidation, which could be catalyzed by acuF, with the carboxylic acid at C-1 subsequently reduced to an aldehyde by acuG. Subsequently, a hemiacetal is formed, before the dehydrogenase acuH would reduce the double bond between C-4 and C-6. Finally, keto-enol tautomerism results in formation of aculinic acid, which exists as two diastereomers (both R/S configurations at C-1) by non-enzymatic hemiacetal formation. The carboxypeptidase acuI could be involved in the linking of aculinic acid to an aculene A moiety produced by the aculene biosynthesis cluster and which leads to the production of aculin A. AcuI may also be involved in the attachment of proline to aculinic acid to form epi-aculins A and B. This is Cytochrome P450 monooxygenase acuC from Aspergillus aculeatus (strain ATCC 16872 / CBS 172.66 / WB 5094).